The chain runs to 308 residues: Zinc transporter ZIP9 (308 aa).

The chain crosses the membrane as a helical span at residues 4 to 24 (FLSISLLSVAMLVGCYVAGII). Asn-29 carries N-linked (GlcNAc...) asparagine glycosylation. A run of 5 helical transmembrane segments spans residues 35-55 (LKLVTVLGAGLLCGTALAVIV), 107-127 (AYIGVSLVLGFVFMLLVDQIG), 147-167 (ITTTLGLVVHAAADGVALGAA), 177-197 (LIVFVAIMLHKAPAAFGLVSF), and 211-231 (HLLVFALAAPAMSMLTYLGLS). The N-linked (GlcNAc...) asparagine glycan is linked to Asn-242. 2 consecutive transmembrane segments (helical) span residues 245 to 265 (GVAMLFSAGTFLYVATVHVLP) and 287 to 307 (LEVAALVLGCLIPLILSIGHQ).

Belongs to the ZIP transporter (TC 2.A.5) family.

It localises to the golgi apparatus. The protein resides in the trans-Golgi network membrane. Its subcellular location is the cell membrane. The protein localises to the cytoplasm. It is found in the perinuclear region. It localises to the mitochondrion. The protein resides in the nucleus. The enzyme catalyses Zn(2+)(in) = Zn(2+)(out). In terms of biological role, transports zinc ions across cell and organelle membranes into the cytoplasm and regulates intracellular zinc homeostasis. Participates in the zinc ions efflux out of the secretory compartments. Regulates intracellular zinc level, resulting in the enhancement of AKT1 and MAPK3/MAPK1 (Erk1/2) phosphorylation in response to the BCR activation. Also functions as a membrane androgen receptor that mediates, through a G protein, the non-classical androgen signaling pathway, characterized by the activation of MAPK3/MAPK1 (Erk1/2) and transcription factors CREB1 or ATF1. This pathway contributes to CLDN1 and CLDN5 expression and tight junction formation between adjacent Sertoli cells. Mediates androgen-induced vascular endothelial cell proliferation through activation of an inhibitory G protein leading to the AKT1 and MAPK3/MAPK1 (Erk1/2) activation which in turn modulate inhibition (phosphorylation) of GSK3B and CCND1 transcription. Moreover, has dual functions as a membrane-bound androgen receptor and as an androgen-dependent zinc transporter both of which are mediated through an inhibitory G protein (Gi) that mediates both MAP kinase and zinc signaling leading to the androgen-dependent apoptotic process. The protein is Zinc transporter ZIP9 of Mus musculus (Mouse).